Reading from the N-terminus, the 372-residue chain is Ephrin type-A receptor 8 (372 aa).

The Protein kinase domain maps to 2–263 (IHIEKIIGSG…HVVSVLEALV (262 aa)). ATP contacts are provided by residues 8-16 (IGSGESGEV) and Lys-34. Asp-127 acts as the Proton acceptor in catalysis. Residue Tyr-206 is modified to Phosphotyrosine; by autocatalysis. The SAM domain maps to 297 to 372 (NGDLTVGDWL…SCTQGPRRHL (76 aa)). Residues 370-372 (RHL) carry the PDZ-binding motif.

Heterotetramer upon binding of the ligand. The heterotetramer is composed of an ephrin dimer and a receptor dimer. Oligomerization is probably required to induce biological responses. May also form heterodimers with other ephrin receptors. Interacts with FYN; possible downstream effector of EPHA8 in regulation of cell adhesion. Interacts with PIK3CG; regulates integrin-mediated cell adhesion to substrate. Interacts with TIAM1; regulates clathrin-mediated endocytosis of EPHA8. Interacts with ANKS1A and ANKS1B; EPHA8 kinase activity-independent but stimulated by EPHA8 ubiquitination. In terms of processing, phosphorylated. Phosphorylation is stimulated upon binding of its ligands including EFNA2, EFNA3 and EFNA5. Autophosphorylation on Tyr-206 modulates tyrosine kinase activity. Post-translationally, ubiquitinated. Ubiquitination by CBL regulates the receptor stability and activity through proteasomal degradation. ANKS1A prevents ubiquitination and degradation. Most abundant in brain.

It is found in the cell membrane. It localises to the cell projection. The protein resides in the early endosome membrane. It carries out the reaction L-tyrosyl-[protein] + ATP = O-phospho-L-tyrosyl-[protein] + ADP + H(+). In terms of biological role, receptor tyrosine kinase which binds promiscuously GPI-anchored ephrin-A family ligands residing on adjacent cells, leading to contact-dependent bidirectional signaling into neighboring cells. The signaling pathway downstream of the receptor is referred to as forward signaling while the signaling pathway downstream of the ephrin ligand is referred to as reverse signaling. The GPI-anchored ephrin-A EFNA2, EFNA3, and EFNA5 are able to activate EPHA8 through phosphorylation. With EFNA5 may regulate integrin-mediated cell adhesion and migration on fibronectin substrate but also neurite outgrowth. During development of the nervous system also plays a role in axon guidance. Downstream effectors of the EPHA8 signaling pathway include FYN which promotes cell adhesion upon activation by EPHA8 and the MAP kinases in the stimulation of neurite outgrowth. The protein is Ephrin type-A receptor 8 (Epha8) of Rattus norvegicus (Rat).